The sequence spans 312 residues: uncharacterized protein (312 aa).

Belongs to the mimivirus R69 family.

This is an uncharacterized protein from Acanthamoeba polyphaga mimivirus (APMV).